The primary structure comprises 432 residues: MSSVVIVGSQWGDEGKGKMTDYLSQEADVVVRSQGGNNAGHTIAFDGKKFALRLVPSGIFAKDKLAVIGNGVVINPPALLKELHYLQDNGIDISGLRISSRSHITFPYHILLDKCQEEAKGDHKVGTTKNGIGPTYMDKVSRVGIRMCDLLEKDTFKEKLERNLAEKNELFTKLYHVDPISFDDIFESYYEYGQELKQYVTDTAQIVNDALDQDKKVLFEGAQGVMLDVDQGTYPYVTASNPIAGGVCTGVGVGPNKIETVVGICKAYSTRVGAGPFPTELTDEIGDQIRETGHEYGTVTGRPRRVGWFDSVAMRHARRVSGISCLSLNLLDVLTGLKTVKICTSYKLDGKQIDYYPASLKELERCEPVYEELPGWDEDITGAKKFEDLPINAQNYLKRVSELSESPLATVSVGADRIQTIIVKDPWEFAHK.

GTP is bound by residues 12 to 18 (GDEGKGK) and 40 to 42 (GHT). Aspartate 13 acts as the Proton acceptor in catalysis. Mg(2+) contacts are provided by aspartate 13 and glycine 40. IMP-binding positions include 13-16 (DEGK), 38-41 (NAGH), threonine 128, arginine 142, glutamine 223, threonine 238, and arginine 302. The Proton donor role is filled by histidine 41. 298–304 (TVTGRPR) provides a ligand contact to substrate. GTP-binding positions include arginine 304, 330–332 (LLD), and 412–414 (SVG).

This sequence belongs to the adenylosuccinate synthetase family. Homodimer. Mg(2+) is required as a cofactor.

The protein localises to the cytoplasm. It carries out the reaction IMP + L-aspartate + GTP = N(6)-(1,2-dicarboxyethyl)-AMP + GDP + phosphate + 2 H(+). It participates in purine metabolism; AMP biosynthesis via de novo pathway; AMP from IMP: step 1/2. Functionally, plays an important role in the de novo pathway of purine nucleotide biosynthesis. Catalyzes the first committed step in the biosynthesis of AMP from IMP. The chain is Adenylosuccinate synthetase from Limosilactobacillus reuteri (strain DSM 20016) (Lactobacillus reuteri).